Here is a 236-residue protein sequence, read N- to C-terminus: CD81 antigen (236 aa).

Residues 1-12 are Cytoplasmic-facing; it reads MGVEGCTKCIKY. The chain crosses the membrane as a helical span at residues 13 to 33; it reads LLFVFNFVFWLAGGVILGVAL. The Extracellular portion of the chain corresponds to 34 to 63; sequence WLRHDPQTTNLLYLELGDKPAPNTFYVGIY. The helical transmembrane segment at 64 to 84 threads the bilayer; that stretch reads ILIAVGAVMMFVGFLGCYGAI. Residues 85–89 lie on the Cytoplasmic side of the membrane; sequence QESQC. Residues 90–112 form a helical membrane-spanning segment; that stretch reads LLGTFFTCLVILFACEVAAGIWG. Residues 113 to 201 are Extracellular-facing; sequence FVNKDQIAKD…QKIDDLFSGK (89 aa). 2 disulfides stabilise this stretch: Cys-156-Cys-190 and Cys-157-Cys-175. The helical transmembrane segment at 202–224 threads the bilayer; it reads LYLIGIAAIVVAVIMIFEMILSM. Glu-219 is a binding site for cholesterol. At 225–236 the chain is on the cytoplasmic side; the sequence is VLCCGIRNSSVY.

This sequence belongs to the tetraspanin (TM4SF) family. As to quaternary structure, homodimer. Part of a complex composed of CD19, CR2/CD21, CD81 and IFITM1/CD225 in the membrane of mature B cells. Interacts (via the second extracellular domain) with CD19; this interaction is initiated early during biosynthesis in the ER and enables trafficking of only properly folded CD19. Part of a complex that includes MHC class II/HLA-DR molecules and IFITM1. Interacts with IFITM1. Interacts with IFITM2 and IFITM3. Part of integrin-tetraspanin complex composed of CD9, CD81, beta-1 and beta-2 integrins in the membrane of monocyte/macrophages. Interacts (via the second extracellular domain) with integrin ITGAV:ITGB3. Interacts with CD247/CD3 zeta, ICAM1 and CD9 at the immune synapse on T cell membrane. Part of a GPCR-tetraspanin complex consisting at least of ADGRG1, CD81, possibly CD9, and GNA11 in which CD81 enhances the association of ADGRG1 with GNA11. Part of a complex composed of CD9, CD81, PTGFRN and IGSF8. Interacts directly with IGSF8. Interacts with CD53 and SCIMP. Interacts with SAMHD1 (via its C-terminus). Interacts with glypican GPC3 and with the transcriptional repressor HHEX; binding to GPC3 decreases the availability of free CD81 for binding to HHEX, resulting in nuclear translocation of HHEX and transcriptional repression. Interacts with CLDN1. Interacts with CLDN6 and CLDN9. In terms of processing, not glycosylated. Post-translationally, likely constitutively palmitoylated at low levels. Protein palmitoylation is up-regulated upon coligation of BCR and CD9-C2R-CD81 complexes in lipid rafts.

The protein localises to the cell membrane. Its subcellular location is the basolateral cell membrane. Functionally, structural component of specialized membrane microdomains known as tetraspanin-enriched microdomains (TERMs), which act as platforms for receptor clustering and signaling. Essential for trafficking and compartmentalization of CD19 receptor on the surface of activated B cells. Upon initial encounter with microbial pathogens, enables the assembly of CD19-CR2/CD21 and B cell receptor (BCR) complexes at signaling TERMs, lowering the threshold dose of antigen required to trigger B cell clonal expansion and antibody production. In T cells, facilitates the localization of CD247/CD3 zeta at antigen-induced synapses with B cells, providing for costimulation and polarization toward T helper type 2 phenotype. Present in MHC class II compartments, may also play a role in antigen presentation. Can act both as positive and negative regulator of homotypic or heterotypic cell-cell fusion processes. Positively regulates sperm-egg fusion and may be involved in acrosome reaction. In myoblasts, associates with CD9 and PTGFRN and inhibits myotube fusion during muscle regeneration. In macrophages, associates with CD9 and beta-1 and beta-2 integrins, and prevents macrophage fusion into multinucleated giant cells specialized in ingesting complement-opsonized large particles. Also prevents the fusion of mononuclear cell progenitors into osteoclasts in charge of bone resorption. May regulate the compartmentalization of enzymatic activities. In T cells, defines the subcellular localization of dNTPase SAMHD1 and permits its degradation by the proteasome, thereby controlling intracellular dNTP levels. Also involved in cell adhesion and motility. Positively regulates integrin-mediated adhesion of macrophages, particularly relevant for the inflammatory response in the lung. This is CD81 antigen (CD81) from Pan troglodytes (Chimpanzee).